The primary structure comprises 440 residues: MSEMTPREIVQELDKYIIGQSEAKRAVAIALRNRWRRGQVPPPLHQEITPKNILMIGPTGVGKTEIARRLAQLANAPFIKVEATKFTEVGYVGKDVESIIRDLTETAVDMIRNERQVALRQRAEELAEERILDILIPGPRDSSVPRSDEGTRQKFRKMLREGKLDAQEIEIEVSAPKGGVEIMAPAGMEEMTNQLREMFSNMAPGKTSTRRVTVSEAQRLLTDDEAAKLVNEEEVRALALERVQSGGIVFIDEIDKVAVRSGTQQGSDVSREGVQRDLLPLVEGSNVSTRYGVVKTDHILFIASGAFHLSKPSDLIPELQGRLPIRVELEALSAADLVRILQEPENALVRQYGALLASDGLALHFTQDGVQRIAEIAQQVNERVENIGARRLHTVMERLLEEVAFVAPDGSTTALEVDAAYVDSRLKDLAQDEDLSRYIL.

Residues I18, 60–65 (GVGKTE), D252, E318, and R390 contribute to the ATP site.

This sequence belongs to the ClpX chaperone family. HslU subfamily. A double ring-shaped homohexamer of HslV is capped on each side by a ring-shaped HslU homohexamer. The assembly of the HslU/HslV complex is dependent on binding of ATP.

It localises to the cytoplasm. Its function is as follows. ATPase subunit of a proteasome-like degradation complex; this subunit has chaperone activity. The binding of ATP and its subsequent hydrolysis by HslU are essential for unfolding of protein substrates subsequently hydrolyzed by HslV. HslU recognizes the N-terminal part of its protein substrates and unfolds these before they are guided to HslV for hydrolysis. This chain is ATP-dependent protease ATPase subunit HslU, found in Acidithiobacillus ferrooxidans (strain ATCC 23270 / DSM 14882 / CIP 104768 / NCIMB 8455) (Ferrobacillus ferrooxidans (strain ATCC 23270)).